The following is a 111-amino-acid chain: Nucleoid-associated protein NMA1657 (111 aa).

The protein belongs to the YbaB/EbfC family. In terms of assembly, homodimer.

The protein localises to the cytoplasm. It localises to the nucleoid. Binds to DNA and alters its conformation. May be involved in regulation of gene expression, nucleoid organization and DNA protection. This chain is Nucleoid-associated protein NMA1657, found in Neisseria meningitidis serogroup A / serotype 4A (strain DSM 15465 / Z2491).